The primary structure comprises 263 residues: Syntaxin-73 (263 aa).

The Cytoplasmic segment spans residues 1–240 (MGVIDLITRV…TVTKLRSSRN (240 aa)). The residue at position 12 (S12) is a Phosphoserine. One can recognise a t-SNARE coiled-coil homology domain in the interval 169-231 (YEMKRIKQAR…KSTNVRLKDT (63 aa)). A helical; Anchor for type IV membrane protein membrane pass occupies residues 241-261 (FCIDIILLCILLGIAAFIYNS). The Vesicular segment spans residues 262-263 (VK).

The protein belongs to the syntaxin family. Part of the t-SNARE complex. Expressed in root, leaf, stem, flower and silique.

The protein localises to the membrane. In terms of biological role, vesicle trafficking protein that functions in the secretory pathway. This Arabidopsis thaliana (Mouse-ear cress) protein is Syntaxin-73 (SYP73).